Reading from the N-terminus, the 418-residue chain is Tyrosine--tRNA ligase (418 aa).

Tyr34 serves as a coordination point for L-tyrosine. The short motif at 39 to 48 (PTADSLHLGH) is the 'HIGH' region element. Tyr169 and Gln173 together coordinate L-tyrosine. The short motif at 229 to 233 (KFGKS) is the 'KMSKS' region element. Position 232 (Lys232) interacts with ATP. The S4 RNA-binding domain occupies 352–418 (LNIVDMLVTA…GKKKYAVLTY (67 aa)).

It belongs to the class-I aminoacyl-tRNA synthetase family. TyrS type 1 subfamily. In terms of assembly, homodimer.

It localises to the cytoplasm. It carries out the reaction tRNA(Tyr) + L-tyrosine + ATP = L-tyrosyl-tRNA(Tyr) + AMP + diphosphate + H(+). Catalyzes the attachment of tyrosine to tRNA(Tyr) in a two-step reaction: tyrosine is first activated by ATP to form Tyr-AMP and then transferred to the acceptor end of tRNA(Tyr). This is Tyrosine--tRNA ligase from Streptococcus equi subsp. equi (strain 4047).